The chain runs to 375 residues: PTS system fructose-specific EIIC component (375 aa).

In terms of domain architecture, PTS EIIC type-2 spans 16–370 (VKEDLMTGVS…KPNFDAKMAA (355 aa)). 10 consecutive transmembrane segments (helical) span residues 24–44 (VSFMIPFVTIGGIFLALGYAV), 68–88 (IGVAGLTLMVPVLGAYIAYAI), 93–113 (GLAPGFILSYIIQQGNVLQAA), 122–142 (GSAGAGYLGAIVAGFLAGIVA), 160–180 (VLLIPVATTAVLTPVMLFVLG), 203–223 (AILLGGILGAMMAADMGGPIN), 238–258 (VTAPMAAVMIAGMVPPIGLAL), 279–299 (VLLGFSFITEGAIPYAAADPA), 301–321 (VIPSVVAGSAVAGAASMALGV), and 340–360 (FMFIACILLGSIVTAVIATAI).

It localises to the cell membrane. Its function is as follows. The phosphoenolpyruvate-dependent sugar phosphotransferase system (sugar PTS), a major carbohydrate active transport system, catalyzes the phosphorylation of incoming sugar substrates concomitantly with their translocation across the cell membrane. The enzyme II PtfABC PTS system is involved in fructose transport. The chain is PTS system fructose-specific EIIC component from Haloferax volcanii (strain ATCC 29605 / DSM 3757 / JCM 8879 / NBRC 14742 / NCIMB 2012 / VKM B-1768 / DS2) (Halobacterium volcanii).